We begin with the raw amino-acid sequence, 147 residues long: Phosphoribosyl-AMP cyclohydrolase (147 aa).

Asp-91 lines the Mg(2+) pocket. Cys-92 contributes to the Zn(2+) binding site. Asp-93 and Asp-95 together coordinate Mg(2+). Cys-108 and Cys-115 together coordinate Zn(2+).

This sequence belongs to the PRA-CH family. Homodimer. Requires Mg(2+) as cofactor. The cofactor is Zn(2+).

Its subcellular location is the cytoplasm. The enzyme catalyses 1-(5-phospho-beta-D-ribosyl)-5'-AMP + H2O = 1-(5-phospho-beta-D-ribosyl)-5-[(5-phospho-beta-D-ribosylamino)methylideneamino]imidazole-4-carboxamide. The protein operates within amino-acid biosynthesis; L-histidine biosynthesis; L-histidine from 5-phospho-alpha-D-ribose 1-diphosphate: step 3/9. Catalyzes the hydrolysis of the adenine ring of phosphoribosyl-AMP. This is Phosphoribosyl-AMP cyclohydrolase from Rhodopseudomonas palustris (strain BisB5).